Consider the following 400-residue polypeptide: tRNA-specific 2-thiouridylase MnmA (400 aa).

ATP contacts are provided by residues 19 to 26 and leucine 45; that span reads AMSGGVDS. The active-site Nucleophile is the cysteine 113. A disulfide bond links cysteine 113 and cysteine 210. ATP is bound at residue glycine 137. Residues 160 to 162 are interaction with tRNA; it reads RDQ. Catalysis depends on cysteine 210, which acts as the Cysteine persulfide intermediate.

Belongs to the MnmA/TRMU family.

Its subcellular location is the cytoplasm. The enzyme catalyses S-sulfanyl-L-cysteinyl-[protein] + uridine(34) in tRNA + AH2 + ATP = 2-thiouridine(34) in tRNA + L-cysteinyl-[protein] + A + AMP + diphosphate + H(+). In terms of biological role, catalyzes the 2-thiolation of uridine at the wobble position (U34) of tRNA, leading to the formation of s(2)U34. This is tRNA-specific 2-thiouridylase MnmA from Rhodopseudomonas palustris (strain BisA53).